Here is a 579-residue protein sequence, read N- to C-terminus: Deleted in azoospermia protein 4 (579 aa).

The span at 1–10 (MSAANPETPN) shows a compositional bias: polar residues. The interval 1 to 27 (MSAANPETPNSTISREASTQSSSAAAS) is disordered. A compositionally biased stretch (low complexity) spans 11 to 27 (STISREASTQSSSAAAS). The 76-residue stretch at 40–115 (NTVFVGGIDA…KKLKLGPAIR (76 aa)) folds into the RRM 1 domain. Over residues 163–175 (QHVQSAANPETPN) the composition is skewed to polar residues. The segment at 163 to 192 (QHVQSAANPETPNSTISREASTQSSSAAAS) is disordered. Residues 176–192 (STISREASTQSSSAAAS) show a composition bias toward low complexity. In terms of domain architecture, RRM 2 spans 205-280 (NTVFVGGIDA…KKLKLGPAIR (76 aa)). DAZ domains lie at 332 to 355 (AYSA…YNYQ), 356 to 379 (EYPT…YNYQ), 380 to 403 (PFPA…YNYQ), 404 to 427 (AFPA…YNYQ), 428 to 451 (PFPA…YNYQ), 452 to 475 (AFPA…YNYQ), 476 to 499 (AFPA…YNYQ), 500 to 523 (AFPA…YNYQ), and 524 to 547 (AFPA…YNYQ).

It belongs to the RRM DAZ family. In terms of assembly, forms a heterodimer with BOLL and DAZL. Interacts with PUM2, DAZAP1, DAZAP2, DZIP1 and DZIP3. In terms of tissue distribution, testis-specific. Expression restricted to premeiotic germ cells, particularly in spermatogonia (at protein level).

It localises to the cytoplasm. The protein resides in the nucleus. Functionally, RNA-binding protein that plays an essential role in spermatogenesis. May act by binding to the 3'-UTR of mRNAs and regulating their translation. The polypeptide is Deleted in azoospermia protein 4 (DAZ4) (Homo sapiens (Human)).